The following is a 457-amino-acid chain: MSGTRASNDRPPSAGGVKRGRLQHEAATTGSRVTVVLGAQWGDEGKGKVVDLLATDADVVSRCQGGNNAGHTVVVDGKEYDFHLLPSGIINPKAVSFIGNGVVVHLPGLFEEAEKNEKKGLKDWEKRLVISDRAHLVFDFHQAVDGLQEVQRQAQEGKNIGTTRKGIGPAYSSKAARTGLRICDLLSDFDEFSSRFKNLARQHQSMFPSLEVDVEGQLKRLKGFAERIRPMVRDGVYFMYEALHGPPKKILVEGANAALLDIDFGTYPFVTSSNCTVGGVCTGLGIPPQNIGEVYGVVKAYTTRVGIGAFPTEQINEIGDLLQSRGHEWGVTTGRKRRCGWLDLMILRYAHMVNGFTALALTKLDILDALDEIKVGVAYKLGGKRIPYFPANQEILQKVEVEYETLPGWKADTTGARKWEDLPPQAQSYIRFVENHVGVAVKWVGVGKSRDSMIQLF.

The tract at residues 1–25 (MSGTRASNDRPPSAGGVKRGRLQHE) is disordered. GTP-binding positions include 42-48 (GDEGKGK) and 70-72 (GHT). Catalysis depends on Asp-43, which acts as the Proton acceptor. Positions 43 and 70 each coordinate Mg(2+). A substrate-binding site is contributed by Asp-43. IMP contacts are provided by residues 43–46 (DEGK), 68–71 (NAGH), Thr-163, Arg-177, Asn-256, Thr-271, and Arg-335. His-71 acts as the Proton donor in catalysis. Residue 331–337 (VTTGRKR) coordinates substrate. GTP is bound by residues Arg-337, 363-365 (KLD), and 445-448 (GVGK).

It belongs to the adenylosuccinate synthetase family. As to quaternary structure, homodimer. Mg(2+) is required as a cofactor.

Its subcellular location is the cytoplasm. It catalyses the reaction IMP + L-aspartate + GTP = N(6)-(1,2-dicarboxyethyl)-AMP + GDP + phosphate + 2 H(+). Its pathway is purine metabolism; AMP biosynthesis via de novo pathway; AMP from IMP: step 1/2. Component of the purine nucleotide cycle (PNC), which interconverts IMP and AMP to regulate the nucleotide levels in various tissues, and which contributes to glycolysis and ammoniagenesis. Catalyzes the first committed step in the biosynthesis of AMP from IMP. This Bos taurus (Bovine) protein is Adenylosuccinate synthetase isozyme 1.